Here is a 137-residue protein sequence, read N- to C-terminus: 2-iminobutanoate/2-iminopropanoate deaminase (137 aa).

S2 carries the post-translational modification N-acetylserine. N6-succinyllysine is present on residues K13 and K67. T74 bears the Phosphothreonine mark. Residue S136 is modified to Phosphoserine.

In terms of assembly, homotrimer. Interacts with YTHDF2. In terms of tissue distribution, expressed by various malignant neoplasms.

Its subcellular location is the cytoplasm. The protein resides in the nucleus. It localises to the peroxisome. The protein localises to the mitochondrion. The enzyme catalyses 2-iminobutanoate + H2O = 2-oxobutanoate + NH4(+). It catalyses the reaction 2-iminopropanoate + H2O = pyruvate + NH4(+). Its function is as follows. Catalyzes the hydrolytic deamination of enamine/imine intermediates that form during the course of normal metabolism. May facilitate the release of ammonia from these potentially toxic reactive metabolites, reducing their impact on cellular components. It may act on enamine/imine intermediates formed by several types of pyridoxal-5'-phosphate-dependent dehydratases including L-threonine dehydratase. Also promotes endoribonucleolytic cleavage of some transcripts by promoting recruitment of the ribonuclease P/MRP complex. Acts by bridging YTHDF2 and the ribonuclease P/MRP complex. RIDA/HRSP12 binds to N6-methyladenosine (m6A)-containing mRNAs containing a 5'-GGUUC-3' motif: cooperative binding of RIDA/HRSP12 and YTHDF2 to such transcripts lead to recruitment of the ribonuclease P/MRP complex and subsequent endoribonucleolytic cleavage. The chain is 2-iminobutanoate/2-iminopropanoate deaminase from Capra hircus (Goat).